We begin with the raw amino-acid sequence, 124 residues long: Small ribosomal subunit protein uS12 (124 aa).

A 3-methylthioaspartic acid modification is found at Asp-89. A disordered region spans residues 105–124 (QGVKNRKQARSRYGAKKEKS). Positions 108–118 (KNRKQARSRYG) are enriched in basic residues.

The protein belongs to the universal ribosomal protein uS12 family. Part of the 30S ribosomal subunit. Contacts proteins S8 and S17. May interact with IF1 in the 30S initiation complex.

Its function is as follows. With S4 and S5 plays an important role in translational accuracy. In terms of biological role, interacts with and stabilizes bases of the 16S rRNA that are involved in tRNA selection in the A site and with the mRNA backbone. Located at the interface of the 30S and 50S subunits, it traverses the body of the 30S subunit contacting proteins on the other side and probably holding the rRNA structure together. The combined cluster of proteins S8, S12 and S17 appears to hold together the shoulder and platform of the 30S subunit. This Mycobacterium avium (strain 104) protein is Small ribosomal subunit protein uS12.